A 466-amino-acid chain; its full sequence is Membrane-bound lytic murein transglycosylase F (466 aa).

The signal sequence occupies residues 1 to 24; it reads MKRFKLNYFIIGLIAILLTWSLWT. The interval 25–268 is non-LT domain; it reads TVPWRNAHQD…RLEEKYLGHV (244 aa). Positions 269 to 466 are LT domain; the sequence is GGFDYVDTKT…KEKKAAQLAD (198 aa). Residue Glu-313 is part of the active site.

It in the N-terminal section; belongs to the bacterial solute-binding protein 3 family. The protein in the C-terminal section; belongs to the transglycosylase Slt family.

It is found in the cell outer membrane. It catalyses the reaction Exolytic cleavage of the (1-&gt;4)-beta-glycosidic linkage between N-acetylmuramic acid (MurNAc) and N-acetylglucosamine (GlcNAc) residues in peptidoglycan, from either the reducing or the non-reducing ends of the peptidoglycan chains, with concomitant formation of a 1,6-anhydrobond in the MurNAc residue.. Murein-degrading enzyme that degrades murein glycan strands and insoluble, high-molecular weight murein sacculi, with the concomitant formation of a 1,6-anhydromuramoyl product. Lytic transglycosylases (LTs) play an integral role in the metabolism of the peptidoglycan (PG) sacculus. Their lytic action creates space within the PG sacculus to allow for its expansion as well as for the insertion of various structures such as secretion systems and flagella. The chain is Membrane-bound lytic murein transglycosylase F from Sodalis glossinidius (strain morsitans).